The sequence spans 335 residues: Holliday junction branch migration complex subunit RuvB (335 aa).

The interval 4-184 (ADRIISTSAK…FGIVQRLEFY (181 aa)) is large ATPase domain (RuvB-L). ATP is bound by residues Ile-23, Arg-24, Gly-65, Lys-68, Thr-69, Thr-70, 131–133 (EDY), Arg-174, Tyr-184, and Arg-221. A Mg(2+)-binding site is contributed by Thr-69. A small ATPAse domain (RuvB-S) region spans residues 185–255 (AVEDLTSIVA…SAKAALLMLD (71 aa)). Residues 258 to 335 (DAGFDYLDRK…RYFGLEKLTE (78 aa)) are head domain (RuvB-H). 3 residues coordinate DNA: Arg-294, Arg-313, and Arg-318.

Belongs to the RuvB family. As to quaternary structure, homohexamer. Forms an RuvA(8)-RuvB(12)-Holliday junction (HJ) complex. HJ DNA is sandwiched between 2 RuvA tetramers; dsDNA enters through RuvA and exits via RuvB. An RuvB hexamer assembles on each DNA strand where it exits the tetramer. Each RuvB hexamer is contacted by two RuvA subunits (via domain III) on 2 adjacent RuvB subunits; this complex drives branch migration. In the full resolvosome a probable DNA-RuvA(4)-RuvB(12)-RuvC(2) complex forms which resolves the HJ.

It is found in the cytoplasm. The catalysed reaction is ATP + H2O = ADP + phosphate + H(+). The RuvA-RuvB-RuvC complex processes Holliday junction (HJ) DNA during genetic recombination and DNA repair, while the RuvA-RuvB complex plays an important role in the rescue of blocked DNA replication forks via replication fork reversal (RFR). RuvA specifically binds to HJ cruciform DNA, conferring on it an open structure. The RuvB hexamer acts as an ATP-dependent pump, pulling dsDNA into and through the RuvAB complex. RuvB forms 2 homohexamers on either side of HJ DNA bound by 1 or 2 RuvA tetramers; 4 subunits per hexamer contact DNA at a time. Coordinated motions by a converter formed by DNA-disengaged RuvB subunits stimulates ATP hydrolysis and nucleotide exchange. Immobilization of the converter enables RuvB to convert the ATP-contained energy into a lever motion, pulling 2 nucleotides of DNA out of the RuvA tetramer per ATP hydrolyzed, thus driving DNA branch migration. The RuvB motors rotate together with the DNA substrate, which together with the progressing nucleotide cycle form the mechanistic basis for DNA recombination by continuous HJ branch migration. Branch migration allows RuvC to scan DNA until it finds its consensus sequence, where it cleaves and resolves cruciform DNA. The chain is Holliday junction branch migration complex subunit RuvB from Pasteurella multocida (strain Pm70).